Here is a 436-residue protein sequence, read N- to C-terminus: tRNA (guanine(37)-N(1))-methyltransferase 1 (436 aa).

S-adenosyl-L-methionine contacts are provided by residues histidine 229, 277–278, and asparagine 325; that span reads DL.

The protein belongs to the class I-like SAM-binding methyltransferase superfamily. TRM5/TYW2 family. In terms of assembly, monomer.

The protein localises to the mitochondrion matrix. Its subcellular location is the nucleus. The protein resides in the cytoplasm. The enzyme catalyses guanosine(37) in tRNA + S-adenosyl-L-methionine = N(1)-methylguanosine(37) in tRNA + S-adenosyl-L-homocysteine + H(+). Functionally, specifically methylates the N1 position of guanosine-37 in various cytoplasmic and mitochondrial tRNAs. Methylation is not dependent on the nature of the nucleoside 5' of the target nucleoside. This is the first step in the biosynthesis of wybutosine (yW), a modified base adjacent to the anticodon of tRNAs and required for accurate decoding. This chain is tRNA (guanine(37)-N(1))-methyltransferase 1, found in Phaeodactylum tricornutum (strain CCAP 1055/1).